The chain runs to 70 residues: MFKLIKKLGQLLVRMYNVEAKRLNDEARKEATQSRALAIRSNELADSASTKVTEAARVANQAQQLSKFFE.

This Escherichia coli (Bacteriophage T7) protein is Protein 4.3.